Here is a 286-residue protein sequence, read N- to C-terminus: 2-dehydro-3-deoxyphosphooctonate aldolase (286 aa).

This sequence belongs to the KdsA family.

The protein resides in the cytoplasm. It carries out the reaction D-arabinose 5-phosphate + phosphoenolpyruvate + H2O = 3-deoxy-alpha-D-manno-2-octulosonate-8-phosphate + phosphate. It participates in carbohydrate biosynthesis; 3-deoxy-D-manno-octulosonate biosynthesis; 3-deoxy-D-manno-octulosonate from D-ribulose 5-phosphate: step 2/3. Its pathway is bacterial outer membrane biogenesis; lipopolysaccharide biosynthesis. This Haemophilus ducreyi (strain 35000HP / ATCC 700724) protein is 2-dehydro-3-deoxyphosphooctonate aldolase.